Consider the following 386-residue polypeptide: Coproporphyrinogen-III oxidase 1, chloroplastic (386 aa).

The transit peptide at 1–48 (MASHSSTLLSSPTFAPFSSHRLHYSPNPSTLRFSRPIRNKPNLALRCS) directs the protein to the chloroplast. An important for dimerization region spans residues 125 to 134 (VLQDGNVFEK). Ser-174 lines the substrate pocket. The active-site Proton donor is His-188. Substrate is bound by residues 190–192 (NYR) and 344–349 (GGRIES). An important for dimerization region spans residues 326 to 361 (YVEFNLVYDRGTTFGLKTGGRIESILVSLPLSARWE).

Belongs to the aerobic coproporphyrinogen-III oxidase family. Homodimer. In terms of tissue distribution, expressed in cotyledons, leaves and roots.

The protein localises to the plastid. The protein resides in the chloroplast. The enzyme catalyses coproporphyrinogen III + O2 + 2 H(+) = protoporphyrinogen IX + 2 CO2 + 2 H2O. Its pathway is porphyrin-containing compound metabolism; protoporphyrin-IX biosynthesis; protoporphyrinogen-IX from coproporphyrinogen-III (O2 route): step 1/1. The protein operates within porphyrin-containing compound metabolism; chlorophyll biosynthesis. Key enzyme in heme biosynthesis. Catalyzes the oxidative decarboxylation of propionic acid side chains of rings A and B of coproporphyrinogen III. This is Coproporphyrinogen-III oxidase 1, chloroplastic (CPX1) from Arabidopsis thaliana (Mouse-ear cress).